The following is a 305-amino-acid chain: Mycothiol acetyltransferase (305 aa).

2 N-acetyltransferase domains span residues 10–153 (DRLD…LVVP) and 156–305 (ISLR…YARA). A 1D-myo-inositol 2-(L-cysteinylamino)-2-deoxy-alpha-D-glucopyranoside-binding site is contributed by Glu38. 82-84 (LAV) is a binding site for acetyl-CoA. Positions 183, 225, and 238 each coordinate 1D-myo-inositol 2-(L-cysteinylamino)-2-deoxy-alpha-D-glucopyranoside. Acetyl-CoA is bound by residues 242–244 (VAI) and 249–255 (QGRGLGR). Residue Tyr276 participates in 1D-myo-inositol 2-(L-cysteinylamino)-2-deoxy-alpha-D-glucopyranoside binding. Acetyl-CoA is bound at residue 281–286 (NESALH).

Belongs to the acetyltransferase family. MshD subfamily. Monomer.

The enzyme catalyses 1D-myo-inositol 2-(L-cysteinylamino)-2-deoxy-alpha-D-glucopyranoside + acetyl-CoA = mycothiol + CoA + H(+). Functionally, catalyzes the transfer of acetyl from acetyl-CoA to desacetylmycothiol (Cys-GlcN-Ins) to form mycothiol. In Rhodococcus jostii (strain RHA1), this protein is Mycothiol acetyltransferase.